The chain runs to 364 residues: Phosphoserine aminotransferase (364 aa).

Arg42 contacts L-glutamate. Residues 76–77 (GR), Trp102, Thr156, Asp175, and Gln198 each bind pyridoxal 5'-phosphate. Residue Lys199 is modified to N6-(pyridoxal phosphate)lysine. 240–241 (NT) serves as a coordination point for pyridoxal 5'-phosphate.

It belongs to the class-V pyridoxal-phosphate-dependent aminotransferase family. SerC subfamily. Homodimer. It depends on pyridoxal 5'-phosphate as a cofactor.

It localises to the cytoplasm. The catalysed reaction is O-phospho-L-serine + 2-oxoglutarate = 3-phosphooxypyruvate + L-glutamate. It carries out the reaction 4-(phosphooxy)-L-threonine + 2-oxoglutarate = (R)-3-hydroxy-2-oxo-4-phosphooxybutanoate + L-glutamate. It functions in the pathway amino-acid biosynthesis; L-serine biosynthesis; L-serine from 3-phospho-D-glycerate: step 2/3. The protein operates within cofactor biosynthesis; pyridoxine 5'-phosphate biosynthesis; pyridoxine 5'-phosphate from D-erythrose 4-phosphate: step 3/5. In terms of biological role, catalyzes the reversible conversion of 3-phosphohydroxypyruvate to phosphoserine and of 3-hydroxy-2-oxo-4-phosphonooxybutanoate to phosphohydroxythreonine. The polypeptide is Phosphoserine aminotransferase (Shewanella sediminis (strain HAW-EB3)).